A 250-amino-acid polypeptide reads, in one-letter code: AA9 family lytic polysaccharide monooxygenase F (250 aa).

The N-terminal stretch at M1–G21 is a signal peptide. H22 serves as a coordination point for Cu(2+). Residue D51 participates in O2 binding. 2 cysteine pairs are disulfide-bonded: C77-C200 and C121-C125. A Cu(2+)-binding site is contributed by H107. Residues H186 and Q195 each contribute to the O2 site. Y197 contacts Cu(2+).

It belongs to the glycosyl hydrolase 61 family. Cu(2+) is required as a cofactor.

Its subcellular location is the secreted. The enzyme catalyses Endohydrolysis of (1-&gt;4)-beta-D-glucosidic linkages in cellulose, lichenin and cereal beta-D-glucans.. Functionally, lytic polysaccharide monooxygenase (LMPO) that depolymerizes crystalline and amorphous polysaccharides via the oxidation of scissile alpha- or beta-(1-4)-glycosidic bonds, yielding C1 or C4 oxidation products. Catalysis by LPMOs requires the reduction of the active-site copper from Cu(II) to Cu(I) by a reducing agent and H(2)O(2) or O(2) as a cosubstrate. Major secreted component of the extracellular cellulolytic system. The sequence is that of AA9 family lytic polysaccharide monooxygenase F from Emericella nidulans (strain FGSC A4 / ATCC 38163 / CBS 112.46 / NRRL 194 / M139) (Aspergillus nidulans).